We begin with the raw amino-acid sequence, 409 residues long: Nucleoprotein (409 aa).

Disordered stretches follow at residues 1 to 32 (MASG…SSGN), 45 to 69 (NSHP…QQHG), 122 to 145 (DVKS…LRFS), 164 to 194 (RSGR…GSED), and 238 to 259 (VDQV…DKMN). Over residues 15-31 (PVIKLGGPKPPKVGSSG) the composition is skewed to low complexity. Residues 29–160 (SSGNASWFQA…GNFRWDFIPL (132 aa)) form an RNA-binding region. A CoV N NTD domain is found at 31–156 (GNASWFQAIK…GGPDGNFRWD (126 aa)). Residues 122 to 138 (DVKSRSHQGTRDPDKFD) show a composition bias toward basic and acidic residues. A compositionally biased stretch (low complexity) spans 164-179 (RSGRSTAASSAASSRA). Composition is skewed to basic and acidic residues over residues 180–192 (PSRD…RSGS) and 247–259 (KGKE…DKMN). 2 positions are modified to phosphoserine; by host: Ser-190 and Ser-192. The region spanning 219 to 331 (ADEMAHRRYC…QCVDGVGTRP (113 aa)) is the CoV N CTD domain. Positions 226–333 (RYCKRTIPPG…VDGVGTRPKD (108 aa)) are dimerization. Cys-320 and Cys-323 are oxidised to a cystine. The disordered stretch occupies residues 326–409 (GVGTRPKDDE…GDSALGENEL (84 aa)). A compositionally biased stretch (low complexity) spans 341–357 (RSSSRPATRTSSPAPRQ). Positions 358–367 (QRPKKEKKPK) are enriched in basic residues. A Phosphothreonine; by host modification is found at Thr-378. At Ser-379 the chain carries Phosphoserine; by host.

Belongs to the gammacoronavirus nucleocapsid protein family. In terms of assembly, homooligomer. Both monomeric and oligomeric forms interact with RNA. Interacts with protein M. Interacts with NSP3; this interaction serves to tether the genome to the newly translated replicase-transcriptase complex at a very early stage of infection. Post-translationally, ADP-ribosylated. The ADP-ribosylation is retained in the virion during infection. Phosphorylated on serine and threonine residues.

The protein localises to the virion. Its subcellular location is the host endoplasmic reticulum-Golgi intermediate compartment. It localises to the host Golgi apparatus. Packages the positive strand viral genome RNA into a helical ribonucleocapsid (RNP) and plays a fundamental role during virion assembly through its interactions with the viral genome and membrane protein M. Plays an important role in enhancing the efficiency of subgenomic viral RNA transcription as well as viral replication. In Avian infectious bronchitis virus (strain Arkansas 99) (IBV), this protein is Nucleoprotein.